A 283-amino-acid chain; its full sequence is 2-dehydro-3-deoxyphosphooctonate aldolase (283 aa).

Belongs to the KdsA family.

The protein resides in the cytoplasm. It catalyses the reaction D-arabinose 5-phosphate + phosphoenolpyruvate + H2O = 3-deoxy-alpha-D-manno-2-octulosonate-8-phosphate + phosphate. Its pathway is carbohydrate biosynthesis; 3-deoxy-D-manno-octulosonate biosynthesis; 3-deoxy-D-manno-octulosonate from D-ribulose 5-phosphate: step 2/3. The protein operates within bacterial outer membrane biogenesis; lipopolysaccharide biosynthesis. The chain is 2-dehydro-3-deoxyphosphooctonate aldolase from Vibrio cholerae serotype O1 (strain ATCC 39315 / El Tor Inaba N16961).